The primary structure comprises 199 residues: GTP cyclohydrolase-2 (199 aa).

52-56 is a GTP binding site; sequence RMHSE. Zn(2+) contacts are provided by Cys57, Cys68, and Cys70. GTP is bound by residues Gln73, 94-96, and Thr116; that span reads EGR. The active-site Proton acceptor is Asp128. The Nucleophile role is filled by Arg130. GTP is bound by residues Thr151 and Lys156.

The protein belongs to the GTP cyclohydrolase II family. Requires Zn(2+) as cofactor.

It carries out the reaction GTP + 4 H2O = 2,5-diamino-6-hydroxy-4-(5-phosphoribosylamino)-pyrimidine + formate + 2 phosphate + 3 H(+). The protein operates within cofactor biosynthesis; riboflavin biosynthesis; 5-amino-6-(D-ribitylamino)uracil from GTP: step 1/4. Its function is as follows. Catalyzes the conversion of GTP to 2,5-diamino-6-ribosylamino-4(3H)-pyrimidinone 5'-phosphate (DARP), formate and pyrophosphate. The polypeptide is GTP cyclohydrolase-2 (Aliivibrio fischeri (strain MJ11) (Vibrio fischeri)).